The following is a 297-amino-acid chain: Mitochondrial nicotinamide adenine dinucleotide transporter SLC25A51 (297 aa).

Over residues 1–11 (MMDSEAHEKRP) the composition is skewed to basic and acidic residues. Residues 1 to 20 (MMDSEAHEKRPPILTSSKQD) are disordered. Solcar repeat units lie at residues 28-108 (VGEM…LSCL), 116-200 (PEFA…IKEH), and 213-296 (NDFI…LLKV). 6 helical membrane-spanning segments follow: residues 36–56 (CGCC…KVLF), 85–105 (LPPL…YEDL), 116–135 (PEFA…EAIF), 179–199 (ILFR…PIKE), 215–235 (FICG…INVV), and 268–289 (LFRG…INAT).

Belongs to the mitochondrial carrier (TC 2.A.29) family.

The protein localises to the mitochondrion inner membrane. The enzyme catalyses NAD(+)(in) = NAD(+)(out). In terms of biological role, mitochondrial membrane carrier protein that mediates the import of NAD(+) into mitochondria. Mitochondrial NAD(+) is required for glycolysis and mitochondrial respiration. Compared to SLC25A52, SLC25A51-mediated transport is essential for the import of NAD(+) in mitochondria. The transport mechanism, uniport or antiport, its electrogenicity and substrate selectivity, remain to be elucidated. The chain is Mitochondrial nicotinamide adenine dinucleotide transporter SLC25A51 from Homo sapiens (Human).